The chain runs to 442 residues: Trigger factor (442 aa).

In terms of domain architecture, PPIase FKBP-type spans 162–247; sequence GDRMTFDFEG…VKAIESRELP (86 aa).

Belongs to the FKBP-type PPIase family. Tig subfamily.

The protein resides in the cytoplasm. It catalyses the reaction [protein]-peptidylproline (omega=180) = [protein]-peptidylproline (omega=0). Its function is as follows. Involved in protein export. Acts as a chaperone by maintaining the newly synthesized protein in an open conformation. Functions as a peptidyl-prolyl cis-trans isomerase. The chain is Trigger factor from Magnetococcus marinus (strain ATCC BAA-1437 / JCM 17883 / MC-1).